A 299-amino-acid chain; its full sequence is MRVDTRKCKGRMMQDLNEIFETIKSVAKEISEVIKYADLGYTTHENATGDTQLKLDVQSDEIITAKFKALSCVKALVSEEKDEILPINTNGKFIIAYDPLDGSSLVDVNFAVGSIFGIYENELKPQNLIAAAYSIYGPRLELVINDKKGTKPKFYRLGKDGNFKFVRELELAQKGKLNATGATQKGWSKTHRNFINELFDEGYRLRYSGAMVSDLHQILLKGGGLFSYPATSDHPNGKLRLLFEVLPFAFIYENAGGTTSDGKSDTLFDVNITKTHQTSPCFFGSASEIALLHKFYGKD.

Mg(2+)-binding residues include glutamate 79, aspartate 98, leucine 100, and aspartate 101. Substrate-binding positions include aspartate 101–serine 104, tyrosine 207, and lysine 238. Glutamate 244 lines the Mg(2+) pocket.

This sequence belongs to the FBPase class 1 family. As to quaternary structure, homotetramer. Mg(2+) is required as a cofactor.

It is found in the cytoplasm. It catalyses the reaction beta-D-fructose 1,6-bisphosphate + H2O = beta-D-fructose 6-phosphate + phosphate. It functions in the pathway carbohydrate biosynthesis; gluconeogenesis. The protein is Fructose-1,6-bisphosphatase class 1 of Campylobacter curvus (strain 525.92).